Here is a 116-residue protein sequence, read N- to C-terminus: Large ribosomal subunit protein P2 (116 aa).

The segment at 60–116 (GKLSSMPSGGGVAAAAGGGGAAAGGGGAAPAAEEKKEEKKEESEEESDDDMGFGLFD) is disordered. Residues 67–87 (SGGGVAAAAGGGGAAAGGGGA) are compositionally biased toward gly residues. The span at 91–101 (AEEKKEEKKEE) shows a compositional bias: basic and acidic residues.

The protein belongs to the eukaryotic ribosomal protein P1/P2 family. P1 and P2 exist as dimers at the large ribosomal subunit. In terms of processing, phosphorylated.

Functionally, plays an important role in the elongation step of protein synthesis. The protein is Large ribosomal subunit protein P2 of Branchiostoma floridae (Florida lancelet).